The following is a 324-amino-acid chain: tRNA N6-adenosine threonylcarbamoyltransferase (324 aa).

Fe cation contacts are provided by histidine 107, histidine 111, and tyrosine 127. Residues 127–131, aspartate 159, glycine 172, glutamate 176, and asparagine 257 each bind substrate; that span reads YVSGG. Aspartate 285 is a Fe cation binding site.

The protein belongs to the KAE1 / TsaD family. In terms of assembly, monomer. Component of the KEOPS complex that consists of Kae1, Bud32, Cgi121 and Pcc1; the whole complex dimerizes. Requires Fe(2+) as cofactor.

Its subcellular location is the cytoplasm. It catalyses the reaction L-threonylcarbamoyladenylate + adenosine(37) in tRNA = N(6)-L-threonylcarbamoyladenosine(37) in tRNA + AMP + H(+). Its function is as follows. Required for the formation of a threonylcarbamoyl group on adenosine at position 37 (t(6)A37) in tRNAs that read codons beginning with adenine. Is a component of the KEOPS complex that is probably involved in the transfer of the threonylcarbamoyl moiety of threonylcarbamoyl-AMP (TC-AMP) to the N6 group of A37. Kae1 likely plays a direct catalytic role in this reaction, but requires other protein(s) of the complex to fulfill this activity. This Pyrococcus horikoshii (strain ATCC 700860 / DSM 12428 / JCM 9974 / NBRC 100139 / OT-3) protein is tRNA N6-adenosine threonylcarbamoyltransferase.